Reading from the N-terminus, the 393-residue chain is NAD(P)H-quinone oxidoreductase subunit H, chloroplastic (393 aa).

This sequence belongs to the complex I 49 kDa subunit family. NDH is composed of at least 16 different subunits, 5 of which are encoded in the nucleus.

It localises to the plastid. Its subcellular location is the chloroplast thylakoid membrane. The catalysed reaction is a plastoquinone + NADH + (n+1) H(+)(in) = a plastoquinol + NAD(+) + n H(+)(out). It catalyses the reaction a plastoquinone + NADPH + (n+1) H(+)(in) = a plastoquinol + NADP(+) + n H(+)(out). Its function is as follows. NDH shuttles electrons from NAD(P)H:plastoquinone, via FMN and iron-sulfur (Fe-S) centers, to quinones in the photosynthetic chain and possibly in a chloroplast respiratory chain. The immediate electron acceptor for the enzyme in this species is believed to be plastoquinone. Couples the redox reaction to proton translocation, and thus conserves the redox energy in a proton gradient. The sequence is that of NAD(P)H-quinone oxidoreductase subunit H, chloroplastic from Brachypodium distachyon (Purple false brome).